A 141-amino-acid polypeptide reads, in one-letter code: VLSSDDKCNVKAVWSKVAGHLEEYGAEALERMFCAYPQTKIYFPHFDLSHGSAQIRAHGKKVFAALHEAVNHIDDLPGALCRLSELHAHSLRVDPVNFKFLAQCVLVVVAIHHPGSLTPEVHASLDKFLCAVSSVLTSKYR.

Residues 1–141 (VLSSDDKCNV…VSSVLTSKYR (141 aa)) enclose the Globin domain. His58 contributes to the O2 binding site. Residue His87 participates in heme b binding.

It belongs to the globin family. Heterotetramer of two alpha chains and two beta chains. In terms of tissue distribution, red blood cells.

In terms of biological role, involved in oxygen transport from the lung to the various peripheral tissues. In Crocodylus niloticus (Nile crocodile), this protein is Hemoglobin subunit alpha (HBA).